The chain runs to 883 residues: MGTAGKGAWVVPAPAYREVEGWEGAGDDSPGFRCGHSLTVVAPTKGHGPRLILFGGATAIEAGASSGMPGIRLAGVTNSVHSYDVDTRRWTRLHPAGEPPSPRAAHAAAAVGTMVVFQGGIGPAGHSTDDLYVLDLTNDKFKWHRVVVQGAGPGPRYGHCMDLVAQRYLVTVSGNDGKRVLSDAWALDTAQKPYRWQKLNPDGDRPSARMYATASARTDGMLLLCGGRDASGMPLSDAYGLLMHTSGQWEWTLAPGVSPSPRYQHAAVFVGARLHVTGGVLRGGRAIEGEGAIAVLDTAAGVWLDRNGIVTSRTLKSSHDHDASSDLLRRCRHAAASVGTQIYIYGGLRGDILLDDFLVADNAPIQSEFTSSMYDRVPRAENQNRNHNFNSDSPTTNNSTDKKSIDMLTQASAAEAEAVSAVWRAAQEASHASSEDSLSEGIGSESPLSETSPMPEDLDDGGSLEPDVKLHSRAVVVSKEAVGDLGCLVRQLSLDQFENESRRMHPSSNDQSYPAKKALNRQRSPQGLHKKVISFLLKPRNWRAPAERAFFLDSYEVGELCYAAEQIFMQEPTVLQLKAPIKVFGDLHGQFGDLMRLFDEYGYPSTAGDITYIDYLFLGDYVDRGQHSLETITLLLALKIEYPENVHLIRGNHEAADINALFGFRLECIERMGESDGIWAWTRFNQLFNYLPLAAMIEKKIICMHGGIGRSINTIEQIEKLERPITMDVGSIILMDLLWSDPTENDSVEGLRPNARGPGLVTFGPDRVTEFCKRNRLQLIIRAHECVMDGFERFAHGQLITLFSATNYCGTANNAGAILVVGRGLVIVPKLIHPLPPPVNSPESSPERAMDATWMQELNIQRPPTPTRGRPQSASDRNSLAYI.

Kelch repeat units follow at residues 64–113 (ASSG…AVGT), 221–271 (MLLL…VFVG), 273–323 (RLHV…DHDA), and 341–387 (QIYI…NRNH). Disordered stretches follow at residues 381-402 (ENQN…STDK), 430-466 (SHAS…SLEP), and 499-525 (NESR…QRSP). Positions 385–399 (RNHNFNSDSPTTNNS) are enriched in polar residues. Residues aspartate 586, histidine 588, aspartate 620, and asparagine 652 each contribute to the Mn(2+) site. The Proton donor role is filled by histidine 653. Histidine 705 and histidine 784 together coordinate Mn(2+). The tract at residues 861 to 883 (QRPPTPTRGRPQSASDRNSLAYI) is disordered. Residues 872–883 (QSASDRNSLAYI) show a composition bias toward polar residues.

It belongs to the PPP phosphatase family. BSU subfamily. As to quaternary structure, interacts with the phosphorylated form of BSK3. It depends on Mn(2+) as a cofactor.

Its subcellular location is the nucleus. The catalysed reaction is O-phospho-L-seryl-[protein] + H2O = L-seryl-[protein] + phosphate. The enzyme catalyses O-phospho-L-threonyl-[protein] + H2O = L-threonyl-[protein] + phosphate. This is Serine/threonine-protein phosphatase BSL1 homolog (BSL1) from Oryza sativa subsp. japonica (Rice).